The sequence spans 201 residues: Prostamide/prostaglandin F synthase (201 aa).

This sequence belongs to the peroxiredoxin-like PRXL2 family. Prostamide/prostaglandin F synthase subfamily.

The protein localises to the cytoplasm. It localises to the cytosol. The catalysed reaction is prostaglandin H2 + [thioredoxin]-dithiol = prostaglandin F2alpha + [thioredoxin]-disulfide. The enzyme catalyses prostamide F2alpha + [thioredoxin]-disulfide = prostamide H2 + [thioredoxin]-dithiol. Functionally, catalyzes the reduction of prostaglandin-ethanolamide H(2) (prostamide H(2)) to prostamide F(2alpha) with NADPH as proton donor. Also able to reduce prostaglandin H(2) to prostaglandin F(2alpha). In Danio rerio (Zebrafish), this protein is Prostamide/prostaglandin F synthase (prxl2b).